Consider the following 354-residue polypeptide: Protein angel (354 aa).

The disordered stretch occupies residues 22-59 (VSSQAKGASGKRKQKAKEMESSHDRNRRWTSLGNQAEG).

The protein belongs to the CCR4/nocturin family. As to expression, ubiquitously expressed in embryos.

The chain is Protein angel (angel) from Drosophila melanogaster (Fruit fly).